The primary structure comprises 446 residues: tRNA modification GTPase MnmE (446 aa).

Residues R24, E81, and K120 each coordinate (6S)-5-formyl-5,6,7,8-tetrahydrofolate. Residues 216-368 enclose the TrmE-type G domain; sequence GLHAVLIGPP…LHIRLRALAL (153 aa). N226 contributes to the K(+) binding site. Residues 226–231, 245–251, and 270–273 contribute to the GTP site; these read NAGKSS, TDVAGTT, and DTAG. S230 contributes to the Mg(2+) binding site. K(+)-binding residues include T245, V247, and T250. Residue T251 coordinates Mg(2+). K446 is a binding site for (6S)-5-formyl-5,6,7,8-tetrahydrofolate.

It belongs to the TRAFAC class TrmE-Era-EngA-EngB-Septin-like GTPase superfamily. TrmE GTPase family. In terms of assembly, homodimer. Heterotetramer of two MnmE and two MnmG subunits. K(+) serves as cofactor.

The protein resides in the cytoplasm. Functionally, exhibits a very high intrinsic GTPase hydrolysis rate. Involved in the addition of a carboxymethylaminomethyl (cmnm) group at the wobble position (U34) of certain tRNAs, forming tRNA-cmnm(5)s(2)U34. The chain is tRNA modification GTPase MnmE from Xanthomonas euvesicatoria pv. vesicatoria (strain 85-10) (Xanthomonas campestris pv. vesicatoria).